We begin with the raw amino-acid sequence, 189 residues long: NADH-ubiquinone oxidoreductase 20.9 kDa subunit (189 aa).

A helical transmembrane segment spans residues 73–88 (AMRLATAVGFFGGFLY).

Complex I is composed of about 40 different subunits. The N-terminus is blocked.

It is found in the mitochondrion inner membrane. The enzyme catalyses a ubiquinone + NADH + 5 H(+)(in) = a ubiquinol + NAD(+) + 4 H(+)(out). Functionally, transfer of electrons from NADH to the respiratory chain. The immediate electron acceptor for the enzyme is believed to be ubiquinone. This chain is NADH-ubiquinone oxidoreductase 20.9 kDa subunit (nuo20.9), found in Neurospora crassa (strain ATCC 24698 / 74-OR23-1A / CBS 708.71 / DSM 1257 / FGSC 987).